Here is a 747-residue protein sequence, read N- to C-terminus: Zinc finger and BTB domain-containing protein 47 (747 aa).

The 69-residue stretch at 15–83 (CDVDLVLVPQ…IYTSKLLVNA (69 aa)) folds into the BTB domain. Lysine 190 participates in a covalent cross-link: Glycyl lysine isopeptide (Lys-Gly) (interchain with G-Cter in SUMO2). Residues 243–424 (QTLHVSTGPE…ARGPPATDGL (182 aa)) are disordered. The segment covering 267-277 (GREDGLQRHSD) has biased composition (basic and acidic residues). Residues 278–354 (EEEEDDEEEE…SEEEEGEEGE (77 aa)) show a composition bias toward acidic residues. Basic and acidic residues predominate over residues 380–398 (RSRENARRRGTPEPEEAGR). Residues 436–459 (HPCQKCPRVFNNRWYLEKHMNVTH) form a C2H2-type 1 zinc finger. Residues 463 to 485 (QICDQCGKRFLLESELLLHRQTD) form a C2H2-type 2; degenerate zinc finger. C2H2-type zinc fingers lie at residues 490-513 (IQCV…KIVH), 520-542 (FSCE…MVAH), 548-570 (FTCE…SLQH), 576-598 (FRCE…MSIH), 604-626 (FMCQ…MKTH), 632-654 (YICE…RRTH), and 660-687 (YPCD…RVSH). The interval 694-747 (VPAAPGLPPTQPQAHALPLLPGLPQTLPPPPHLPPPPPLFPTTASPGGRMNANN) is disordered. Over residues 719–733 (TLPPPPHLPPPPPLF) the composition is skewed to pro residues.

It belongs to the krueppel C2H2-type zinc-finger protein family.

The protein localises to the nucleus. May be involved in transcriptional regulation. This Homo sapiens (Human) protein is Zinc finger and BTB domain-containing protein 47 (ZBTB47).